Here is a 1377-residue protein sequence, read N- to C-terminus: DNA-directed RNA polymerase subunit beta (1377 aa).

This sequence belongs to the RNA polymerase beta chain family. As to quaternary structure, the RNAP catalytic core consists of 2 alpha, 1 beta, 1 beta' and 1 omega subunit. When a sigma factor is associated with the core the holoenzyme is formed, which can initiate transcription.

It carries out the reaction RNA(n) + a ribonucleoside 5'-triphosphate = RNA(n+1) + diphosphate. Functionally, DNA-dependent RNA polymerase catalyzes the transcription of DNA into RNA using the four ribonucleoside triphosphates as substrates. This is DNA-directed RNA polymerase subunit beta from Orientia tsutsugamushi (strain Boryong) (Rickettsia tsutsugamushi).